Reading from the N-terminus, the 233-residue chain is TATA-box-binding protein 1 (233 aa).

A run of 2 repeats spans residues 58-134 and 148-225.

It belongs to the TBP family. In terms of assembly, belongs to the TFIID complex together with the TBP-associated factors (TAFs). Binds DNA as monomer.

It is found in the nucleus. Functionally, general transcription factor that functions at the core of the DNA-binding multiprotein factor TFIID. Binding of TFIID to the TATA box is the initial transcriptional step of the pre-initiation complex (PIC), playing a role in the activation of eukaryotic genes transcribed by RNA polymerase II. The polypeptide is TATA-box-binding protein 1 (TBP1) (Triticum aestivum (Wheat)).